A 78-amino-acid chain; its full sequence is Small ribosomal subunit protein bS16 (78 aa).

It belongs to the bacterial ribosomal protein bS16 family.

This Maridesulfovibrio salexigens (strain ATCC 14822 / DSM 2638 / NCIMB 8403 / VKM B-1763) (Desulfovibrio salexigens) protein is Small ribosomal subunit protein bS16.